Consider the following 218-residue polypeptide: MPMTLGYWDIRGLAHAIRLLLEYTDSSYEEKRYTMGDAPDYDRSQWLSEKFKLGLDFPNLPYLIDGSHKITQSNAILRYIARKHNLCGETEEEKIRVDILENQAMDVSNQLARVCYSPDFENLKAEYLEQLPGMMELFSQFLGKQTWFVGEKITFVDFLAYDILDLHLIFEPKCLDAFPNLKDFVARFEGLKKISVYMKTSRFLRTPLYTRVATWGNK.

The GST N-terminal domain occupies 1 to 88 (MPMTLGYWDI…YIARKHNLCG (88 aa)). Glutathione is bound by residues 7 to 8 (YW), 46 to 50 (WLSEK), 59 to 60 (NL), and 72 to 73 (QS). One can recognise a GST C-terminal domain in the interval 90–208 (TEEEKIRVDI…KTSRFLRTPL (119 aa)). Position 116 (Tyr-116) interacts with substrate.

It belongs to the GST superfamily. Mu family. As to quaternary structure, homodimer.

The protein resides in the cytoplasm. The catalysed reaction is RX + glutathione = an S-substituted glutathione + a halide anion + H(+). The enzyme catalyses 1-chloro-2,4-dinitrobenzene + glutathione = 2,4-dinitrophenyl-S-glutathione + chloride + H(+). It carries out the reaction (13S,14S)-epoxy-(4Z,7Z,9E,11E,16Z,19Z)-docosahexaenoate + glutathione = (13R)-S-glutathionyl-(14S)-hydroxy-(4Z,7Z,9E,11E,16Z,19Z)-docosahexaenoate. It catalyses the reaction leukotriene C4 = leukotriene A4 + glutathione. Its function is as follows. Conjugation of reduced glutathione to a wide number of exogenous and endogenous hydrophobic electrophiles. Catalyzes the conjugation of leukotriene A4 with reduced glutathione (GSH) to form leukotriene C4. Can also catalyze the transfer of a glutathionyl group from glutathione (GSH) to 13(S),14(S)-epoxy-docosahexaenoic acid to form maresin conjugate in tissue regeneration 1 (MCTR1), a bioactive lipid mediator that possess potent anti-inflammatory and proresolving actions. The polypeptide is Glutathione S-transferase Mu 4 (Gstm4) (Rattus norvegicus (Rat)).